Reading from the N-terminus, the 250-residue chain is 5'-nucleotidase SurE (250 aa).

A divalent metal cation is bound by residues Asp-8, Asp-9, Ser-40, and Asn-95.

This sequence belongs to the SurE nucleotidase family. A divalent metal cation is required as a cofactor.

The protein localises to the cytoplasm. The enzyme catalyses a ribonucleoside 5'-phosphate + H2O = a ribonucleoside + phosphate. In terms of biological role, nucleotidase that shows phosphatase activity on nucleoside 5'-monophosphates. The chain is 5'-nucleotidase SurE from Nitratidesulfovibrio vulgaris (strain DP4) (Desulfovibrio vulgaris).